We begin with the raw amino-acid sequence, 306 residues long: D-alanine--D-alanine ligase (306 aa).

The ATP-grasp domain occupies 101–303; that stretch reads KQVWQAVGLP…FSQLVVKILE (203 aa). Position 134 to 189 (134 to 189) interacts with ATP; it reads FTHLGLPLIVKPSREGSSVGMSKVNTLSDLPAALEEAFRHDDDVLVEKWLSGPEYT. The Mg(2+) site is built by Asp-257, Glu-270, and Asn-272.

The protein belongs to the D-alanine--D-alanine ligase family. The cofactor is Mg(2+). Requires Mn(2+) as cofactor.

It localises to the cytoplasm. It carries out the reaction 2 D-alanine + ATP = D-alanyl-D-alanine + ADP + phosphate + H(+). It participates in cell wall biogenesis; peptidoglycan biosynthesis. In terms of biological role, cell wall formation. The polypeptide is D-alanine--D-alanine ligase (Pectobacterium atrosepticum (strain SCRI 1043 / ATCC BAA-672) (Erwinia carotovora subsp. atroseptica)).